The primary structure comprises 156 residues: Ribosome maturation factor RimP (156 aa).

This sequence belongs to the RimP family.

It is found in the cytoplasm. Required for maturation of 30S ribosomal subunits. The chain is Ribosome maturation factor RimP from Bacillus thuringiensis (strain Al Hakam).